A 275-amino-acid chain; its full sequence is Interleukin-2 receptor subunit alpha (275 aa).

The N-terminal stretch at 1–21 is a signal peptide; sequence MEPSLLLWGILTFVVVHGHVT. The Sushi 1 domain occupies 22 to 84; the sequence is ELCDENPPDI…SWENQCRCIS (63 aa). Over 22-243 the chain is Extracellular; sequence ELCDENPPDI…ESFVFTTEYQ (222 aa). Intrachain disulfides connect C24-C67, C49-C80, and C51-C82. N-linked (GlcNAc...) asparagine glycosylation is found at N60 and N70. Positions 91–118 are disordered; sequence DGQIIPKPEEQKGKSPMGMQSQMQPTDQ. The span at 108–118 shows a compositional bias: polar residues; that stretch reads GMQSQMQPTDQ. One can recognise a Sushi 2 domain in the interval 123 to 186; the sequence is GHCREPPPWE…WTQPRLQCLS (64 aa). Disulfide bonds link C125-C168 and C152-C184. The segment at 188 to 213 is disordered; it reads RSDGWFPDDEEPQASTDAALGSDTSC. The helical transmembrane segment at 244 to 262 threads the bilayer; it reads IAVAGCVLLLISIVLLSGL. Over 263 to 275 the chain is Cytoplasmic; sequence TWQRRWRKSRRTI.

As to quaternary structure, non-covalent dimer of an alpha and a beta subunit. IL2R exists in 3 different forms: a high affinity dimer, an intermediate affinity monomer (beta subunit), and a low affinity monomer (alpha subunit). The high and intermediate affinity forms also associate with a gamma subunit.

Its subcellular location is the membrane. Receptor for interleukin-2. The receptor is involved in the regulation of immune tolerance by controlling regulatory T cells (TREGs) activity. TREGs suppress the activation and expansion of autoreactive T-cells. The sequence is that of Interleukin-2 receptor subunit alpha (IL2RA) from Felis catus (Cat).